Reading from the N-terminus, the 439-residue chain is MKYIYIKTWGCQMNEYDSSMITVFLEKTGRYLITKEVEKADILILNTCSIREKAQEKVFHQLGRWKKLKNKKPDVIIAVGGCVATQEGKEIFKRANYVDIVFGTQTLHKLAQMIDKVEKNRRFMIDISFPQLEKFNYSLEPKKTGYTASISIMEGCNKYCSFCVVPYTRGHEISRPSDDILLEISILAENGVREINLLGQNVNAYRGRTFNGKICFFSELLRLVSEIDGIDRIRFTTSNPLEFTDDIIEVYQDTPKLVSFLHLPVQSGSNRILQLMKRSYTTEEYEKIIEKLILARSNIQISSDFIVGFPSESEEDFQKTINFIKKINFDMSFSFIYSSRPGTPASEMKDNIDLQEKKKRLYTLQNCINKQTMSWSRKMLKSTQSVLVEGVSKKNIMELYGKTENNRIVTFKGSHKMIGKFIKLKIKKVHTHSLQGELI.

In terms of domain architecture, MTTase N-terminal spans 2 to 119; that stretch reads KYIYIKTWGC…LAQMIDKVEK (118 aa). Residues Cys11, Cys48, Cys82, Cys156, Cys160, and Cys163 each coordinate [4Fe-4S] cluster. A Radical SAM core domain is found at 142-374; sequence KKTGYTASIS…QNCINKQTMS (233 aa). The 63-residue stretch at 377–439 folds into the TRAM domain; it reads RKMLKSTQSV…HTHSLQGELI (63 aa).

It belongs to the methylthiotransferase family. MiaB subfamily. Monomer. It depends on [4Fe-4S] cluster as a cofactor.

The protein resides in the cytoplasm. It catalyses the reaction N(6)-dimethylallyladenosine(37) in tRNA + (sulfur carrier)-SH + AH2 + 2 S-adenosyl-L-methionine = 2-methylsulfanyl-N(6)-dimethylallyladenosine(37) in tRNA + (sulfur carrier)-H + 5'-deoxyadenosine + L-methionine + A + S-adenosyl-L-homocysteine + 2 H(+). Its function is as follows. Catalyzes the methylthiolation of N6-(dimethylallyl)adenosine (i(6)A), leading to the formation of 2-methylthio-N6-(dimethylallyl)adenosine (ms(2)i(6)A) at position 37 in tRNAs that read codons beginning with uridine. In Buchnera aphidicola subsp. Schizaphis graminum (strain Sg), this protein is tRNA-2-methylthio-N(6)-dimethylallyladenosine synthase.